We begin with the raw amino-acid sequence, 341 residues long: MSDSETEETTKQSTEPVDNAWSLKIPTFKAEDNPHGMVEESSFATLFPKYREKYLKEVWPLVQQTVAEHHLRAELDLIEGSMVVKTTRKTWDPYIIIKSRDMIKLMARSVPFEQAKRVLQDETGCDIIKIGNLVHKKEKFVKRRQRLIGPNGATLKSIELLTDCYVLVQGNTVAALGPYKGLQQVRDIVLETMNNVHPIYNIKALMIKRELMKDPQLANEDWSRFLPKFKNKNISKRKQPKSRKPKGEYTPFPPAQPESKIDKQLASGEYFLNKEQKQAKRQQERVAKQAEAAKKQDERRNKDFMPPTEDSPEQNRKRPSEASKVDVKALKAKLLKANKQK.

Positions D126–N194 constitute a KH domain. Residues K230–K244 show a composition bias toward basic residues. Residues K230–V327 are disordered. A coiled-coil region spans residues F271–K341. 2 stretches are compositionally biased toward basic and acidic residues: residues L272 to D303 and E313 to V327.

The protein belongs to the KRR1 family. Monomer. Component of the ribosomal small subunit (SSU) processome.

It is found in the nucleus. It localises to the nucleolus. Required for 40S ribosome biogenesis. Involved in nucleolar processing of pre-18S ribosomal RNA and ribosome assembly. Binds to RNA. Required for female germline development, cell viability during eye development and for survival of dividing cells and epithelial cells during early wing disk development. The sequence is that of KRR1 small subunit processome component homolog from Drosophila grimshawi (Hawaiian fruit fly).